The sequence spans 110 residues: Ribonuclease P protein component (110 aa).

It belongs to the RnpA family. As to quaternary structure, consists of a catalytic RNA component (M1 or rnpB) and a protein subunit.

The enzyme catalyses Endonucleolytic cleavage of RNA, removing 5'-extranucleotides from tRNA precursor.. RNaseP catalyzes the removal of the 5'-leader sequence from pre-tRNA to produce the mature 5'-terminus. It can also cleave other RNA substrates such as 4.5S RNA. The protein component plays an auxiliary but essential role in vivo by binding to the 5'-leader sequence and broadening the substrate specificity of the ribozyme. The polypeptide is Ribonuclease P protein component (Mesorhizobium japonicum (strain LMG 29417 / CECT 9101 / MAFF 303099) (Mesorhizobium loti (strain MAFF 303099))).